A 78-amino-acid chain; its full sequence is Probable [Fe-S]-dependent transcriptional repressor (78 aa).

Residues C56, C61, C64, and C70 each contribute to the iron-sulfur cluster site.

This sequence belongs to the FeoC family.

Its function is as follows. May function as a transcriptional regulator that controls feoABC expression. This is Probable [Fe-S]-dependent transcriptional repressor from Escherichia coli O9:H4 (strain HS).